The primary structure comprises 195 residues: Capsid protein (195 aa).

The segment at 148-195 (NAPILSTLPETTVVRRRGRSPRRRTPSPRRRRSQSPRRRRSASPASQC) is disordered. Basic residues predominate over residues 161–188 (VRRRGRSPRRRTPSPRRRRSQSPRRRRS). Phosphoserine; by host occurs at positions 167, 174, and 182. One copy of the 1; half-length repeat lies at 167 to 172 (SPRRRT). The 3 X 7 AA repeats of S-P-R-R-R-[PR]-S stretch occupies residues 167–188 (SPRRRTPSPRRRRSQSPRRRRS). The Bipartite nuclear localization signal signature appears at 170–187 (RRTPSPRRRRSQSPRRRR). 2 tandem repeats follow at residues 174 to 180 (SPRRRRS) and 182 to 188 (SPRRRRS). The RNA binding stretch occupies residues 189-195 (ASPASQC).

The protein belongs to the orthohepadnavirus core antigen family. In terms of assembly, homodimerizes, then multimerizes. Interacts with cytosol exposed regions of viral L glycoprotein present in the reticulum-to-Golgi compartment. Interacts with human FLNB. Phosphorylated form interacts with host importin alpha; this interaction depends on the exposure of the NLS, which itself depends upon genome maturation and/or phosphorylation of the capsid protein. Interacts with host NUP153. Post-translationally, phosphorylated by host SRPK1, SRPK2, and maybe protein kinase C or GAPDH. Phosphorylation is critical for pregenomic RNA packaging. Protein kinase C phosphorylation is stimulated by HBx protein and may play a role in transport of the viral genome to the nucleus at the late step during the viral replication cycle.

Its subcellular location is the virion. The protein localises to the host cytoplasm. In terms of biological role, self assembles to form an icosahedral capsid. Most capsids appear to be large particles with an icosahedral symmetry of T=4 and consist of 240 copies of capsid protein, though a fraction forms smaller T=3 particles consisting of 180 capsid proteins. Entering capsids are transported along microtubules to the nucleus. Phosphorylation of the capsid is thought to induce exposure of nuclear localization signal in the C-terminal portion of the capsid protein that allows binding to the nuclear pore complex via the importin (karyopherin-) alpha and beta. Capsids are imported in intact form through the nuclear pore into the nuclear basket, where it probably binds NUP153. Only capsids that contain the mature viral genome can release the viral DNA and capsid protein into the nucleoplasm. Immature capsids get stuck in the basket. Capsids encapsulate the pre-genomic RNA and the P protein. Pre-genomic RNA is reverse-transcribed into DNA while the capsid is still in the cytoplasm. The capsid can then either be directed to the nucleus, providing more genomes for transcription, or bud through the endoplasmic reticulum to provide new virions. The protein is Capsid protein of Hepatitis B virus genotype G (isolate United States/USG17/2002) (HBV-G).